The chain runs to 878 residues: Aconitate hydratase A (878 aa).

The [4Fe-4S] cluster site is built by C426, C492, and C495.

The protein belongs to the aconitase/IPM isomerase family. In terms of assembly, monomer. The cofactor is [4Fe-4S] cluster.

The catalysed reaction is citrate = D-threo-isocitrate. The enzyme catalyses (2S,3R)-3-hydroxybutane-1,2,3-tricarboxylate = 2-methyl-cis-aconitate + H2O. Its pathway is carbohydrate metabolism; tricarboxylic acid cycle; isocitrate from oxaloacetate: step 2/2. The protein operates within organic acid metabolism; propanoate degradation. In terms of biological role, involved in the catabolism of short chain fatty acids (SCFA) via the tricarboxylic acid (TCA)(acetyl degradation route) and probably the 2-methylcitrate cycle I (propionate degradation route). Catalyzes the reversible isomerization of citrate to isocitrate via cis-aconitate. Could catalyze the hydration of 2-methyl-cis-aconitate to yield (2R,3S)-2-methylisocitrate. The apo form of AcnA functions as a RNA-binding regulatory protein. This is Aconitate hydratase A (acnA) from Rickettsia felis (strain ATCC VR-1525 / URRWXCal2) (Rickettsia azadi).